The following is a 162-amino-acid chain: Lipoprotein signal peptidase (162 aa).

The next 2 helical transmembrane spans lie at 66–86 (PFFIAVTLVAMAAIAITFRKL) and 92–112 (LAAVSLSLIFSGAVGNLIDRV). Active-site residues include aspartate 119 and aspartate 137. A helical membrane pass occupies residues 132–152 (AFNVADSAICVGVALLALDMI).

It belongs to the peptidase A8 family.

It localises to the cell inner membrane. The catalysed reaction is Release of signal peptides from bacterial membrane prolipoproteins. Hydrolyzes -Xaa-Yaa-Zaa-|-(S,diacylglyceryl)Cys-, in which Xaa is hydrophobic (preferably Leu), and Yaa (Ala or Ser) and Zaa (Gly or Ala) have small, neutral side chains.. The protein operates within protein modification; lipoprotein biosynthesis (signal peptide cleavage). Its function is as follows. This protein specifically catalyzes the removal of signal peptides from prolipoproteins. The chain is Lipoprotein signal peptidase from Geobacter metallireducens (strain ATCC 53774 / DSM 7210 / GS-15).